Reading from the N-terminus, the 1007-residue chain is Exportin-7 (1007 aa).

The protein belongs to the exportin family.

The protein localises to the nucleus. Its subcellular location is the cytoplasm. It is found in the nuclear pore complex. Its function is as follows. Mediates the nuclear export of proteins (cargos) with broad substrate specificity. The protein is Exportin-7 (xpo7) of Dictyostelium discoideum (Social amoeba).